Here is a 797-residue protein sequence, read N- to C-terminus: Probable DNA polymerase (797 aa).

Belongs to the DNA polymerase type-B family.

The protein resides in the mitochondrion. It carries out the reaction DNA(n) + a 2'-deoxyribonucleoside 5'-triphosphate = DNA(n+1) + diphosphate. The sequence is that of Probable DNA polymerase from Agaricus bitorquis (Pavement mushroom).